The sequence spans 513 residues: MQSVLVLDFGSQYTQLIARRIRELGIYSEILPYNTTPETIREHAPKAIILSGGPTSVYGESAILPHEGIFSLGLPILGICYGLQAIAKHFGGEVASSAKQEFGRAKMLVSRDGEPESMLFRNIPDSDVWMSHGDKVVNLPDGFRITASSANSEMCALETYGSKGALKVFGLQFHPEVQHTLYGKQLLSNFLIDIAGITPDWSPKHFIDHQIEEIRRTAGDETVICGISGGVDSSVAAVLVSRAIGKNLHCVFVDNGLLRKNEADKVMQFLKHLGLRLTLADASELFLKRLKNVASPEKKRKIIGRTFIQVFEEQLDKEKFLVQGTLYPDVIESVSVKGPSETIKSHHNVGGLPKRMKLKLIEPLRELFKDEVRAVGRELGIAEDILMRHPFPGPGLAVRVLGSVSKERLDILRDADEIFLEELKSSGLYQKVWQAFSVLLPVQSVGVMGDKRTYENVLALRAVESSDGMTADWAQLPHDFLARVSNRIINEVRGINRVAYDISSKPPATIEWE.

The Glutamine amidotransferase type-1 domain maps to 3 to 200 (SVLVLDFGSQ…LIDIAGITPD (198 aa)). Cys-80 serves as the catalytic Nucleophile. Catalysis depends on residues His-174 and Glu-176. In terms of domain architecture, GMPS ATP-PPase spans 201–388 (WSPKHFIDHQ…LGIAEDILMR (188 aa)). Position 228 to 234 (228 to 234 (SGGVDSS)) interacts with ATP.

In terms of assembly, homodimer.

The enzyme catalyses XMP + L-glutamine + ATP + H2O = GMP + L-glutamate + AMP + diphosphate + 2 H(+). It participates in purine metabolism; GMP biosynthesis; GMP from XMP (L-Gln route): step 1/1. Its function is as follows. Catalyzes the synthesis of GMP from XMP. This is GMP synthase [glutamine-hydrolyzing] from Chlorobium limicola (strain DSM 245 / NBRC 103803 / 6330).